Consider the following 111-residue polypeptide: Nucleoid-associated protein PFL_1905 (111 aa).

2 disordered regions span residues M1–A20 and S88–F111.

The protein belongs to the YbaB/EbfC family. In terms of assembly, homodimer.

It localises to the cytoplasm. It is found in the nucleoid. In terms of biological role, binds to DNA and alters its conformation. May be involved in regulation of gene expression, nucleoid organization and DNA protection. This is Nucleoid-associated protein PFL_1905 from Pseudomonas fluorescens (strain ATCC BAA-477 / NRRL B-23932 / Pf-5).